The sequence spans 117 residues: Large ribosomal subunit protein bL20 (117 aa).

It belongs to the bacterial ribosomal protein bL20 family.

In terms of biological role, binds directly to 23S ribosomal RNA and is necessary for the in vitro assembly process of the 50S ribosomal subunit. It is not involved in the protein synthesizing functions of that subunit. The polypeptide is Large ribosomal subunit protein bL20 (Actinobacillus pleuropneumoniae serotype 7 (strain AP76)).